The chain runs to 201 residues: MSRYRGPRFKKIRRLGALPGLTSKRPRAGSDLRNQSRSGKRSQYRIRLEEKQKLRFHYGLTERQLLKYVRIAGKAKGSTGQVLLQLLEMRLDNILFRLGMASTIPGARQLVNHRHILVNGRIVDIPSYRCKPRDIITAKDEQKSRALIQNYLDSSPHEELPKHLTLHSFQYKGLVNQIIDSKWVGLKINELLVVEYYSRQT.

The interval 20-43 is disordered; that stretch reads GLTSKRPRAGSDLRNQSRSGKRSQ. In terms of domain architecture, S4 RNA-binding spans 89–149; it reads MRLDNILFRL…DEQKSRALIQ (61 aa).

This sequence belongs to the universal ribosomal protein uS4 family. In terms of assembly, part of the 30S ribosomal subunit. Contacts protein S5. The interaction surface between S4 and S5 is involved in control of translational fidelity.

The protein resides in the plastid. The protein localises to the chloroplast. Its function is as follows. One of the primary rRNA binding proteins, it binds directly to 16S rRNA where it nucleates assembly of the body of the 30S subunit. In terms of biological role, with S5 and S12 plays an important role in translational accuracy. The sequence is that of Small ribosomal subunit protein uS4c (rps4) from Buxus microphylla (Littleleaf boxwood).